Here is a 255-residue protein sequence, read N- to C-terminus: Octanoyltransferase (255 aa).

In terms of domain architecture, BPL/LPL catalytic spans 54–238; that stretch reads GDAAELVWLL…AFTEIFGATV (185 aa). Substrate-binding positions include 92–99, 167–169, and 180–182; these read RGGQLTYH, AIG, and GIA. Catalysis depends on Cys198, which acts as the Acyl-thioester intermediate.

This sequence belongs to the LipB family.

It localises to the cytoplasm. The enzyme catalyses octanoyl-[ACP] + L-lysyl-[protein] = N(6)-octanoyl-L-lysyl-[protein] + holo-[ACP] + H(+). It functions in the pathway protein modification; protein lipoylation via endogenous pathway; protein N(6)-(lipoyl)lysine from octanoyl-[acyl-carrier-protein]: step 1/2. In terms of biological role, catalyzes the transfer of endogenously produced octanoic acid from octanoyl-acyl-carrier-protein onto the lipoyl domains of lipoate-dependent enzymes. Lipoyl-ACP can also act as a substrate although octanoyl-ACP is likely to be the physiological substrate. The protein is Octanoyltransferase of Rhodopseudomonas palustris (strain HaA2).